The primary structure comprises 271 residues: Membrane protein insertase YidC 1 (271 aa).

An N-terminal signal peptide occupies residues Met-1 to Ala-20. Cys-21 carries the N-palmitoyl cysteine lipid modification. Cys-21 is lipidated: S-diacylglycerol cysteine. 4 helical membrane passes run Ile-45–Ile-65, Tyr-124–Leu-144, Pro-163–Leu-183, and Val-201–Trp-221.

This sequence belongs to the OXA1/ALB3/YidC family. Type 2 subfamily.

The protein localises to the cell membrane. Its function is as follows. Required for the insertion and/or proper folding and/or complex formation of integral membrane proteins into the membrane. Involved in integration of membrane proteins that insert both dependently and independently of the Sec translocase complex, as well as at least some lipoproteins. This Streptococcus agalactiae serotype V (strain ATCC BAA-611 / 2603 V/R) protein is Membrane protein insertase YidC 1.